Here is a 614-residue protein sequence, read N- to C-terminus: Probable Xaa-Pro aminopeptidase P (614 aa).

Positions 411, 422, 520, and 534 each coordinate Mn(2+).

Belongs to the peptidase M24B family. It depends on Mn(2+) as a cofactor.

The catalysed reaction is Release of any N-terminal amino acid, including proline, that is linked to proline, even from a dipeptide or tripeptide.. Catalyzes the removal of a penultimate prolyl residue from the N-termini of peptides. This is Probable Xaa-Pro aminopeptidase P (AMPP) from Sordaria macrospora (strain ATCC MYA-333 / DSM 997 / K(L3346) / K-hell).